The primary structure comprises 360 residues: Phospho-N-acetylmuramoyl-pentapeptide-transferase (360 aa).

Transmembrane regions (helical) follow at residues tyrosine 21 to glycine 41, threonine 73 to leucine 93, tyrosine 97 to tyrosine 117, tyrosine 134 to methionine 154, valine 168 to serine 188, glycine 199 to threonine 219, leucine 239 to tyrosine 259, valine 263 to leucine 283, leucine 288 to valine 308, and valine 338 to lysine 358.

It belongs to the glycosyltransferase 4 family. MraY subfamily. Mg(2+) serves as cofactor.

The protein localises to the cell inner membrane. The enzyme catalyses UDP-N-acetyl-alpha-D-muramoyl-L-alanyl-gamma-D-glutamyl-meso-2,6-diaminopimeloyl-D-alanyl-D-alanine + di-trans,octa-cis-undecaprenyl phosphate = di-trans,octa-cis-undecaprenyl diphospho-N-acetyl-alpha-D-muramoyl-L-alanyl-D-glutamyl-meso-2,6-diaminopimeloyl-D-alanyl-D-alanine + UMP. It functions in the pathway cell wall biogenesis; peptidoglycan biosynthesis. Its function is as follows. Catalyzes the initial step of the lipid cycle reactions in the biosynthesis of the cell wall peptidoglycan: transfers peptidoglycan precursor phospho-MurNAc-pentapeptide from UDP-MurNAc-pentapeptide onto the lipid carrier undecaprenyl phosphate, yielding undecaprenyl-pyrophosphoryl-MurNAc-pentapeptide, known as lipid I. This Alteromonas mediterranea (strain DSM 17117 / CIP 110805 / LMG 28347 / Deep ecotype) protein is Phospho-N-acetylmuramoyl-pentapeptide-transferase.